The primary structure comprises 562 residues: uncharacterized protein (562 aa).

This is an uncharacterized protein from Saccharolobus islandicus (Sulfolobus islandicus).